The sequence spans 906 residues: MCRIVGAPRTLLPLLAALLQASVDASGEISLCKTGFPEDVYSAVLSRDVLEGQPLLNVKFSNCNGKRKVQYESSEPADFKVDEDGMVYAVRSFPLSSEHSKFLIYAQDKETQEKWQVAVKLSLKPALPEDSVKESREIEEIVFPRQVTKHNGYLQRQKRDWVIPPINLPENSRGPFPQELVRIRSDRDKNLSLRYSVTGPGADQPPTGIFIINPISGQLSVTKPLDRELIARFHLRAHAVDINGNQVENPIDIVINVIDMNDNRPEFLHQVWNGTVPEGSKPGTYVMTVTAIDADDPNALNGMLRYRILSQAPSTPSPNMFTINNETGDIITVAAGLDREKVQQYTLIIQATDMEGNPTYGLSNTATAVITVTDVNDNPPEFTAMTFYGEVPENRVDVIVANLTVTDKDQPHTPAWNAIYRISGGDPAGRFAIQTDPNSNDGLVTVVKPIDFETNRMYVLTVAAENQVPLAKGIQHPPQSTATVSVTVIDVNENPYFAPNPKIIRQEEGLHAGTVLTTFTAQDPDRYMQQNIRYTKLSDPANWLKIDSVNGQITTIAVLDRESPNVKANIYNATFLASDNGIPPMSGTGTLQIYLLDINDNAPQVLPQEAEICETPDPNSINITALDYDIDPNAGPFAFDLPLSPVTIKRNWTITRLNGDFAQLNLKIKFLEAGIYEVPIIITDSGNPPKSNISILRVKVCQCDSNGDCTDVDRIVGAGLGTGAIIAILLCIIILLILVLMFVVWMKRRDKERQAKQLLIDPEDDVRDNILKYDEEGGGEEDQDYDLSQLQQPDTVEPDAIKPVGIRRLDERPIHAEPQYPVRSAAPHPGDIGDFINEGLKAADNDPTAPPYDSLLVFDYEGSGSTAGSLSSLNSSSSGGEQDYDYLNDWGPRFKKLADMYGGGDD.

The first 25 residues, 1-25 (MCRIVGAPRTLLPLLAALLQASVDA), serve as a signal peptide directing secretion. The propeptide occupies 26–159 (SGEISLCKTG…HNGYLQRQKR (134 aa)). Phosphoserine is present on residues S96 and S135. Cadherin domains follow at residues 160–267 (DWVI…RPEF), 268–392 (LHQV…GEVP), 393–497 (ENRV…NPYF), 498–603 (APNP…DNAP), and 604–714 (QVLP…DVDR). At 160 to 724 (DWVIPPINLP…IVGAGLGTGA (565 aa)) the chain is on the extracellular side. E170 contributes to the Ca(2+) binding site. N-linked (GlcNAc...) asparagine glycosylation is present at N190. D226, E228, D259, M260, N261, D262, and N263 together coordinate Ca(2+). An N-linked (GlcNAc...) asparagine glycan is attached at N273. Residues D293, D295, and N301 each coordinate Ca(2+). N325 carries N-linked (GlcNAc...) asparagine glycosylation. Ca(2+) is bound at residue D353. 6 N-linked (GlcNAc...) asparagine glycosylation sites follow: N357, N402, N572, N622, N651, and N692. The helical transmembrane segment at 725 to 746 (IIAILLCIIILLILVLMFVVWM) threads the bilayer. The Cytoplasmic segment spans residues 747-906 (KRRDKERQAK…LADMYGGGDD (160 aa)). The segment covering 863–880 (SGSTAGSLSSLNSSSSGG) has biased composition (low complexity). A disordered region spans residues 863 to 884 (SGSTAGSLSSLNSSSSGGEQDY).

In terms of assembly, homodimer (via extracellular region). Can also form heterodimers with other cadherins (via extracellular region). Dimerization occurs in trans, i.e. with a cadherin chain from another cell. Interacts with CDCP1. Interacts with PCDH8; this complex may also include TAOK2. The interaction with PCDH8 may lead to internalization through TAOK2/p38 MAPK pathway. Identified in a complex containing FGFR4, NCAM1, CDH2, PLCG1, FRS2, SRC, SHC1, GAP43 and CTTN. May interact with OBSCN (via protein kinase domain 2). Interacts with FBXO45. Cleaved by MMP24. Ectodomain cleavage leads to the generation of a soluble 90 kDa N-terminal soluble fragment and a 45 kDa membrane-bound C-terminal fragment 1 (CTF1), which is further cleaved by gamma-secretase into a 35 kDa. Cleavage in neural stem cells by MMP24 affects CDH2-mediated anchorage of neural stem cells to ependymocytes in the adult subependymal zone, leading to modulate neural stem cell quiescence. In terms of processing, may be phosphorylated by OBSCN. In terms of tissue distribution, detected in liver, kidney, heart and brain capillaries.

It is found in the cell membrane. The protein resides in the sarcolemma. The protein localises to the cell junction. Its subcellular location is the cell surface. It localises to the desmosome. It is found in the adherens junction. Its function is as follows. Calcium-dependent cell adhesion protein; preferentially mediates homotypic cell-cell adhesion by dimerization with a CDH2 chain from another cell. Cadherins may thus contribute to the sorting of heterogeneous cell types. Acts as a regulator of neural stem cells quiescence by mediating anchorage of neural stem cells to ependymocytes in the adult subependymal zone: upon cleavage by MMP24, CDH2-mediated anchorage is affected, leading to modulate neural stem cell quiescence. Plays a role in cell-to-cell junction formation between pancreatic beta cells and neural crest stem (NCS) cells, promoting the formation of processes by NCS cells. Required for proper neurite branching. Required for pre- and postsynaptic organization. CDH2 may be involved in neuronal recognition mechanism. In hippocampal neurons, may regulate dendritic spine density. This chain is Cadherin-2 (CDH2), found in Bos taurus (Bovine).